Reading from the N-terminus, the 447-residue chain is GTPase Der (447 aa).

2 EngA-type G domains span residues 3 to 167 and 181 to 354; these read PVIA…VQER and VKIA…AAAM. GTP contacts are provided by residues 9-16, 56-60, 119-122, 187-194, 234-238, and 299-302; these read GRPNVGKS, DTGGF, NKAE, DTAGL, and NKWD. The KH-like domain maps to 355-439; it reads VKLPTPQLTR…PLRIEFRTNK (85 aa).

It belongs to the TRAFAC class TrmE-Era-EngA-EngB-Septin-like GTPase superfamily. EngA (Der) GTPase family. Associates with the 50S ribosomal subunit.

GTPase that plays an essential role in the late steps of ribosome biogenesis. In Cupriavidus taiwanensis (strain DSM 17343 / BCRC 17206 / CCUG 44338 / CIP 107171 / LMG 19424 / R1) (Ralstonia taiwanensis (strain LMG 19424)), this protein is GTPase Der.